A 342-amino-acid chain; its full sequence is Aspartate carbamoyltransferase catalytic subunit (342 aa).

Carbamoyl phosphate contacts are provided by R54 and T55. K82 is an L-aspartate binding site. Residues R104, H134, and Q137 each contribute to the carbamoyl phosphate site. Positions 177 and 232 each coordinate L-aspartate. Residues G277 and P278 each coordinate carbamoyl phosphate.

Belongs to the aspartate/ornithine carbamoyltransferase superfamily. ATCase family. Heterododecamer (2C3:3R2) of six catalytic PyrB chains organized as two trimers (C3), and six regulatory PyrI chains organized as three dimers (R2).

The catalysed reaction is carbamoyl phosphate + L-aspartate = N-carbamoyl-L-aspartate + phosphate + H(+). It functions in the pathway pyrimidine metabolism; UMP biosynthesis via de novo pathway; (S)-dihydroorotate from bicarbonate: step 2/3. Catalyzes the condensation of carbamoyl phosphate and aspartate to form carbamoyl aspartate and inorganic phosphate, the committed step in the de novo pyrimidine nucleotide biosynthesis pathway. This Pseudarthrobacter chlorophenolicus (strain ATCC 700700 / DSM 12829 / CIP 107037 / JCM 12360 / KCTC 9906 / NCIMB 13794 / A6) (Arthrobacter chlorophenolicus) protein is Aspartate carbamoyltransferase catalytic subunit.